We begin with the raw amino-acid sequence, 493 residues long: Trans-aconitate decarboxylase 1 (493 aa).

The segment at 1–22 is disordered; the sequence is MAPALNANPTTKRDELSAPSAS.

It belongs to the class-II fumarase/aspartase family.

It localises to the cytoplasm. The protein localises to the cytosol. Its subcellular location is the nucleus. It catalyses the reaction trans-aconitate + H(+) = itaconate + CO2. Its pathway is secondary metabolite biosynthesis. Trans-aconitate decarboxylase; part of the gene cluster that mediates the biosynthesis of itaconic acid and 2-hydroxyparaconate. Cis-aconitate is secreted by the mitochondrial tricarboxylate transporter MTT1. In the cytosol cis-aconitate is converted into trans-aconitate via isomerization by the aconitate-delta-isomerase ADI1. Decarboxylation of trans-aconitate by the trans-aconitate decarboxylase TAD1 then leads then to the production of itaconic acid. The cytochrome P450 monooxygenase CYP3 further converts itaconate to 2-hydroxyparaconate via oxidation of the double bond, leading to a transient epoxide, which can subsequently be lactonized to produce 2-hydroxyparaconate. Secretion of itaconate and possibly 2-hydroxyparaconate into the medium is mediated by the major facilitator ITP1. The glyoxalase domain-containing protein RDO1 is not involved in the biosynthesis of itaconate and 2-hydroxyparaconate, however, it might play a role in the further conversion of 2-hydroxyparaconate to itatartarate. The chain is Trans-aconitate decarboxylase 1 from Mycosarcoma maydis (Corn smut fungus).